Here is a 459-residue protein sequence, read N- to C-terminus: Cysteine--tRNA ligase (459 aa).

Cys28 lines the Zn(2+) pocket. The short motif at 30–40 (ITVYDLCHVGH) is the 'HIGH' region element. Zn(2+) contacts are provided by Cys209, His234, and Glu238. A 'KMSKS' region motif is present at residues 266-270 (KMSKS). Lys269 serves as a coordination point for ATP.

This sequence belongs to the class-I aminoacyl-tRNA synthetase family. As to quaternary structure, monomer. Zn(2+) serves as cofactor.

The protein resides in the cytoplasm. It carries out the reaction tRNA(Cys) + L-cysteine + ATP = L-cysteinyl-tRNA(Cys) + AMP + diphosphate. This Pasteurella multocida (strain Pm70) protein is Cysteine--tRNA ligase (cysS).